Here is a 499-residue protein sequence, read N- to C-terminus: Cytochrome P450 monooxygenase notH' (499 aa).

A helical transmembrane segment spans residues 11 to 31 (LGLEPAGWALALLTSSIIYLF). Asn296 and Asn427 each carry an N-linked (GlcNAc...) asparagine glycan. Residue Cys440 participates in heme binding.

It belongs to the cytochrome P450 family. Requires heme as cofactor.

Its subcellular location is the membrane. It participates in alkaloid biosynthesis. Its function is as follows. Cytochrome P450 monooxygenase; part of the gene cluster that mediates the biosynthesis of notoamide, a fungal indole alkaloid that belongs to a family of natural products containing a characteristic bicyclo[2.2.2]diazaoctane core. The first step of notoamide biosynthesis involves coupling of L-proline and L-tryptophan by the bimodular NRPS notE', to produce cyclo-L-tryptophan-L-proline called brevianamide F. The reverse prenyltransferase notF' then acts as a deoxybrevianamide E synthase and converts brevianamide F to deoxybrevianamide E via reverse prenylation at C-2 of the indole ring leading to the bicyclo[2.2.2]diazaoctane core. Deoxybrevianamide E is further hydroxylated at C-6 of the indole ring, likely catalyzed by the cytochrome P450 monooxygenase notG', to yield 6-hydroxy-deoxybrevianamide E. 6-hydroxy-deoxybrevianamide E is a specific substrate of the prenyltransferase notC' for normal prenylation at C-7 to produce 6-hydroxy-7-prenyl-deoxybrevianamide, also called notoamide S. As the proposed pivotal branching point in notoamide biosynthesis, notoamide S can be diverted to notoamide E through an oxidative pyran ring closure putatively catalyzed by either notH' cytochrome P450 monooxygenase or the notD' FAD-linked oxidoreductase. This step would be followed by an indole 2,3-epoxidation-initiated pinacol-like rearrangement catalyzed by the notB' FAD-dependent monooxygenase leading to the formation of notoamide C and notoamide D. On the other hand notoamide S is converted to notoamide T by notH' (or notD'), a bifunctional oxidase that also functions as the intramolecular Diels-Alderase responsible for generation of (-)-notoamide T. To generate antipodal (+)-notoaminide T, notH (or notD) in Aspergillus strain MF297-2 is expected to catalyze a Diels-Alder reaction leading to the opposite stereochemistry. The remaining oxidoreductase notD' (or notH') likely catalyzes the oxidative pyran ring formation to yield (-)-stephacidin A. The FAD-dependent monooxygenase notI' is highly similar to notB' and is predicted to catalyze a similar conversion from (-)-stephacidin A to (+)-notoamide B via the 2,3-epoxidation of (-)-stephacidin A followed by a pinacol-type rearrangement. Finally, it remains unclear which enzyme could be responsible for the final hydroxylation steps leading to notoamide A and sclerotiamide. In Aspergillus versicolor, this protein is Cytochrome P450 monooxygenase notH'.